A 228-amino-acid chain; its full sequence is Urease accessory protein UreF 1 (228 aa).

Belongs to the UreF family. In terms of assembly, ureD, UreF and UreG form a complex that acts as a GTP-hydrolysis-dependent molecular chaperone, activating the urease apoprotein by helping to assemble the nickel containing metallocenter of UreC. The UreE protein probably delivers the nickel.

The protein localises to the cytoplasm. Its function is as follows. Required for maturation of urease via the functional incorporation of the urease nickel metallocenter. The polypeptide is Urease accessory protein UreF 1 (Brucella anthropi (strain ATCC 49188 / DSM 6882 / CCUG 24695 / JCM 21032 / LMG 3331 / NBRC 15819 / NCTC 12168 / Alc 37) (Ochrobactrum anthropi)).